The sequence spans 129 residues: Small ribosomal subunit protein uS11 (129 aa).

Belongs to the universal ribosomal protein uS11 family. In terms of assembly, part of the 30S ribosomal subunit. Interacts with proteins S7 and S18. Binds to IF-3.

In terms of biological role, located on the platform of the 30S subunit, it bridges several disparate RNA helices of the 16S rRNA. Forms part of the Shine-Dalgarno cleft in the 70S ribosome. The polypeptide is Small ribosomal subunit protein uS11 (Methylocella silvestris (strain DSM 15510 / CIP 108128 / LMG 27833 / NCIMB 13906 / BL2)).